The following is a 147-amino-acid chain: MWLPTPLGPLWLEVSPLGVRRLEPALYPRGPEAEGALALRVREAVQAYFAGERPDFLDLPLDYTGLSPARLRLYERVRLVPYGRTVSYGALGRELGLSPRAVGAALRACPFFLLVPAHRVIHADGRLGGFQGQEGLKLWLLRFEGAL.

Belongs to the MGMT family. ATL subfamily. In terms of assembly, interacts with several proteins, including UvrA, UvrD and the three subunits of the RNA polymerase.

Its function is as follows. Involved in DNA damage recognition. Binds DNA containing O(6)-methylguanine and larger O(6)-alkylguanine adducts. Binds to the damaged base and flips the base out of the DNA duplex into an extrahelical conformation, which allows processing by repair proteins. Also affects the regulation of gene expression in response to alkylation. This Thermus thermophilus (strain ATCC 27634 / DSM 579 / HB8) protein is DNA base-flipping protein.